We begin with the raw amino-acid sequence, 102 residues long: Large ribosomal subunit protein bL21 (102 aa).

The protein belongs to the bacterial ribosomal protein bL21 family. Part of the 50S ribosomal subunit. Contacts protein L20.

Its function is as follows. This protein binds to 23S rRNA in the presence of protein L20. This is Large ribosomal subunit protein bL21 from Ehrlichia canis (strain Jake).